The sequence spans 262 residues: Expansin-A13 (262 aa).

An N-terminal signal peptide occupies residues 1–22 (MAGVARMLAAVVCAIMPAAAMA). One can recognise an Expansin-like EG45 domain in the interval 52 to 167 (GGACGYGNLY…QRVPCMKKGG (116 aa)). An Expansin-like CBD domain is found at 177 to 257 (YFQLVLLTNV…GWRFGQTFAS (81 aa)).

It belongs to the expansin family. Expansin A subfamily. Expressed in roots and flowers.

It localises to the secreted. Its subcellular location is the cell wall. The protein localises to the membrane. May cause loosening and extension of plant cell walls by disrupting non-covalent bonding between cellulose microfibrils and matrix glucans. No enzymatic activity has been found. May be required for rapid internodal elongation in deepwater rice during submergence. The protein is Expansin-A13 (EXPA13) of Oryza sativa subsp. japonica (Rice).